A 650-amino-acid chain; its full sequence is p-hydroxybenzoic acid efflux pump subunit AaeB (650 aa).

The next 11 membrane-spanning stretches (helical) occupy residues 7–27, 32–52, 61–81, 87–107, 115–135, 148–168, 365–385, 402–422, 426–446, 450–470, and 478–498; these read FPIK…HLNL, WAVM…GGDP, GILR…IMIA, VVML…SSLI, LGLA…SGGL, EIIL…PRSI, LFWL…LGVI, FVYG…YILP, QSAV…GILI, QIGT…DNPM, and IDNA…ILLI.

The protein belongs to the aromatic acid exporter ArAE (TC 2.A.85) family.

It is found in the cell inner membrane. In terms of biological role, forms an efflux pump with AaeA. Could function as a metabolic relief valve, allowing to eliminate certain compounds when they accumulate to high levels in the cell. The protein is p-hydroxybenzoic acid efflux pump subunit AaeB of Pantoea ananatis (strain LMG 20103).